The primary structure comprises 150 residues: Regulatory protein RecX (150 aa).

It belongs to the RecX family.

Its subcellular location is the cytoplasm. In terms of biological role, modulates RecA activity. The chain is Regulatory protein RecX from Legionella pneumophila (strain Corby).